Consider the following 526-residue polypeptide: Adenylyl cyclase-associated protein (526 aa).

The interval M1 to S168 is adenyl cyclase-binding. Disordered regions lie at residues E43 to E72, Q255 to K304, and K326 to R371. Residues S45–S64 show a composition bias toward polar residues. An SH3-binding motif is present at residues A169–P369. The segment covering A262–A274 has biased composition (low complexity). Positions P275 to P285 are enriched in pro residues. Residues E290–A302 show a composition bias toward polar residues. Residues K326 to E338 are compositionally biased toward basic and acidic residues. Positions S342–S352 are enriched in low complexity. An interaction with SH3 domain of ABP1 region spans residues P354–P361. A compositionally biased stretch (basic residues) spans R357–P370. Residues P369–I504 form the C-CAP/cofactor C-like domain. The segment at P370–G526 is dimerization and actin-binding. The residue at position 454 (S454) is a Phosphoserine.

The protein belongs to the CAP family. As to quaternary structure, homodimer.

It localises to the cytoplasm. It is found in the cytoskeleton. The protein localises to the actin patch. The N-terminal domain binds to adenylyl cyclase, thereby enabling adenylyl cyclase to be activated by upstream regulatory signals, such as Ras. The C-terminal domain is required for normal cellular morphology and growth control. The sequence is that of Adenylyl cyclase-associated protein (SRV2) from Saccharomyces cerevisiae (strain ATCC 204508 / S288c) (Baker's yeast).